We begin with the raw amino-acid sequence, 232 residues long: Cytidylate kinase (232 aa).

The tract at residues 1-21 (MSEDTPLVVAMDGPSGTGKSS) is disordered. 13 to 21 (GPSGTGKSS) is a binding site for ATP.

This sequence belongs to the cytidylate kinase family. Type 1 subfamily.

It is found in the cytoplasm. The catalysed reaction is CMP + ATP = CDP + ADP. The enzyme catalyses dCMP + ATP = dCDP + ADP. This chain is Cytidylate kinase, found in Nocardia farcinica (strain IFM 10152).